We begin with the raw amino-acid sequence, 250 residues long: Small ribosomal subunit protein uS3 (250 aa).

The region spanning 39-107 (VRAALKKRLY…EVHLNIVEIR (69 aa)) is the KH type-2 domain. The interval 215-250 (LDKRLATESGPAGEGGGRERGDRPDRGDRRDRRDRA) is disordered. Residues 230-250 (GGRERGDRPDRGDRRDRRDRA) are compositionally biased toward basic and acidic residues.

This sequence belongs to the universal ribosomal protein uS3 family. As to quaternary structure, part of the 30S ribosomal subunit. Forms a tight complex with proteins S10 and S14.

Binds the lower part of the 30S subunit head. Binds mRNA in the 70S ribosome, positioning it for translation. This chain is Small ribosomal subunit protein uS3, found in Caulobacter vibrioides (strain ATCC 19089 / CIP 103742 / CB 15) (Caulobacter crescentus).